The chain runs to 306 residues: Histone-lysine N-methyltransferase SETMAR (306 aa).

Positions 60–123 (PGCACLKTPC…RCRNRVVQWG (64 aa)) constitute a Pre-SET domain. Zn(2+)-binding residues include cysteine 62, cysteine 64, cysteine 69, cysteine 74, cysteine 76, cysteine 105, cysteine 109, cysteine 111, and cysteine 115. The SET domain occupies 126 to 250 (FHLQVFKTDH…PEEELSYDYS (125 aa)). Residues 136-138 (KGW), tyrosine 179, arginine 207, and 210-211 (NH) each bind S-adenosyl-L-methionine. Cysteine 213, cysteine 274, cysteine 276, and cysteine 281 together coordinate Zn(2+). In terms of domain architecture, Post-SET spans 270–286 (LRKPCYCGARSCAAFLP).

The protein belongs to the class V-like SAM-binding methyltransferase superfamily.

Its subcellular location is the nucleus. It localises to the chromosome. The catalysed reaction is L-lysyl(36)-[histone H3] + 2 S-adenosyl-L-methionine = N(6),N(6)-dimethyl-L-lysyl(36)-[histone H3] + 2 S-adenosyl-L-homocysteine + 2 H(+). In terms of biological role, histone methyltransferase that methylates 'Lys-4' and 'Lys-36' of histone H3, 2 specific tags for epigenetic transcriptional activation. Specifically mediates dimethylation of H3 'Lys-36'. This Bos taurus (Bovine) protein is Histone-lysine N-methyltransferase SETMAR.